We begin with the raw amino-acid sequence, 623 residues long: Kelch repeat and BTB domain-containing protein 2 (623 aa).

The BTB domain occupies 31–98; that stretch reads TDIVLIVEGT…AYTGNLAMND (68 aa). Positions 133–229 constitute a BACK domain; sequence CVRLLSFADL…IRIDALSEVT (97 aa). The residue at position 300 (Ser-300) is a Phosphoserine. 5 Kelch repeats span residues 317 to 380, 381 to 429, 431 to 469, 470 to 529, and 535 to 581; these read DIYI…CCEG, HIYA…VVHD, IYVMTLNLMYCYFPRSDSWVEMAMRQTSRSFASAAAFGD, KIFY…RAVV, and CVFM…DFRC.

As to quaternary structure, component of the BCR(KBTBD2) E3 ubiquitin ligase complex, at least composed of CUL3, KBTBD2 and RBX1. Interacts (via the BTB domain) with CUL3.

It functions in the pathway protein modification; protein ubiquitination. Functionally, substrate-specific adapter of a BCR (BTB-CUL3-RBX1) E3 ubiquitin ligase complex that acts as a regulator of the insulin signaling pathway, modulating insulin sensitivity by limiting PIK3R1/p85alpha abundance in adipocytes. Targets PIK3R1, the regulatory subunit of phosphatidylinositol 3-kinase (PI3K), for 'Lys-48'-linked polyubiquitination and proteasome-mediated degradation. In Pongo abelii (Sumatran orangutan), this protein is Kelch repeat and BTB domain-containing protein 2 (KBTBD2).